The sequence spans 172 residues: Small ribosomal subunit protein uS5 (172 aa).

Residues 16-79 (LKDRLVAINR…EAAKKNLIRV (64 aa)) enclose the S5 DRBM domain.

This sequence belongs to the universal ribosomal protein uS5 family. As to quaternary structure, part of the 30S ribosomal subunit. Contacts proteins S4 and S8.

Functionally, with S4 and S12 plays an important role in translational accuracy. Located at the back of the 30S subunit body where it stabilizes the conformation of the head with respect to the body. This Porphyromonas gingivalis (strain ATCC BAA-308 / W83) protein is Small ribosomal subunit protein uS5.